The following is an 804-amino-acid chain: Ion-translocating oxidoreductase complex subunit C (804 aa).

2 consecutive 4Fe-4S ferredoxin-type domains span residues 366-397 (SEMGQNEAEQGCIRCSACADACPAALLPQQLY) and 407-436 (KARAHNIADCIECGACAYVCPSNIPLVQYY). [4Fe-4S] cluster contacts are provided by Cys377, Cys380, Cys383, Cys387, Cys416, Cys419, Cys422, and Cys426. Disordered regions lie at residues 466–532 (RLER…EVRV) and 567–804 (KAAQ…MQED). 7 stretches are compositionally biased toward low complexity: residues 484 to 495 (SVASSDAGAIAA), 567 to 582 (KAAQAAEASPTEAPQQ), 592 to 619 (AAVAAAVARTKAKKAAQAAEASPTEAPQ), 629 to 660 (KAAVAAAVARAKAKKAAQAAEASATEAPQQSA), 668 to 693 (AAVAAAVARAKAKKAAQAAEASATEA), 706 to 731 (AAVAAAVARAKAKKAAQAAEASATEA), and 744 to 769 (AAVAAAVARAKAKKAAQAAEASATEA).

This sequence belongs to the 4Fe4S bacterial-type ferredoxin family. RnfC subfamily. The complex is composed of six subunits: RnfA, RnfB, RnfC, RnfD, RnfE and RnfG. Requires [4Fe-4S] cluster as cofactor.

It is found in the cell inner membrane. Its function is as follows. Part of a membrane-bound complex that couples electron transfer with translocation of ions across the membrane. The polypeptide is Ion-translocating oxidoreductase complex subunit C (Erwinia tasmaniensis (strain DSM 17950 / CFBP 7177 / CIP 109463 / NCPPB 4357 / Et1/99)).